The sequence spans 118 residues: uncharacterized protein (118 aa).

It localises to the mitochondrion. This is an uncharacterized protein from Arabidopsis thaliana (Mouse-ear cress).